The chain runs to 280 residues: Urease accessory protein UreD 3 (280 aa).

It belongs to the UreD family. In terms of assembly, ureD, UreF and UreG form a complex that acts as a GTP-hydrolysis-dependent molecular chaperone, activating the urease apoprotein by helping to assemble the nickel containing metallocenter of UreC. The UreE protein probably delivers the nickel.

Its subcellular location is the cytoplasm. In terms of biological role, required for maturation of urease via the functional incorporation of the urease nickel metallocenter. This is Urease accessory protein UreD 3 from Bradyrhizobium sp. (strain ORS 278).